Here is a 326-residue protein sequence, read N- to C-terminus: Ribosomal large subunit pseudouridine synthase D (326 aa).

Residues Gln-18–Glu-91 form the S4 RNA-binding domain. Asp-139 is an active-site residue.

This sequence belongs to the pseudouridine synthase RluA family.

It localises to the cytoplasm. It catalyses the reaction uridine(1911/1915/1917) in 23S rRNA = pseudouridine(1911/1915/1917) in 23S rRNA. Responsible for synthesis of pseudouridine from uracil at positions 1911, 1915 and 1917 in 23S ribosomal RNA. This chain is Ribosomal large subunit pseudouridine synthase D (rluD), found in Shigella flexneri.